Consider the following 394-residue polypeptide: Elongation factor Tu (394 aa).

Residues 10–204 (KPHVNVGTIG…ALDSYIPEPQ (195 aa)) form the tr-type G domain. Residues 19–26 (GHVDHGKT) are G1. Residue 19-26 (GHVDHGKT) coordinates GTP. Position 26 (T26) interacts with Mg(2+). The segment at 60 to 64 (GITIN) is G2. Residues 81–84 (DCPG) form a G3 region. Residues 81-85 (DCPGH) and 136-139 (NKCD) each bind GTP. A G4 region spans residues 136–139 (NKCD). The tract at residues 174–176 (SAL) is G5.

This sequence belongs to the TRAFAC class translation factor GTPase superfamily. Classic translation factor GTPase family. EF-Tu/EF-1A subfamily. Monomer.

The protein resides in the cytoplasm. The catalysed reaction is GTP + H2O = GDP + phosphate + H(+). In terms of biological role, GTP hydrolase that promotes the GTP-dependent binding of aminoacyl-tRNA to the A-site of ribosomes during protein biosynthesis. This chain is Elongation factor Tu, found in Shewanella baltica (strain OS185).